A 409-amino-acid polypeptide reads, in one-letter code: Argininosuccinate synthase (409 aa).

ATP contacts are provided by residues 10 to 18 (AYSGGLDTS) and alanine 37. L-citrulline is bound by residues tyrosine 90 and serine 95. Residue glycine 120 coordinates ATP. Threonine 122, asparagine 126, and aspartate 127 together coordinate L-aspartate. Residue asparagine 126 participates in L-citrulline binding. 5 residues coordinate L-citrulline: arginine 130, serine 182, serine 191, glutamate 267, and tyrosine 279.

It belongs to the argininosuccinate synthase family. Type 1 subfamily. As to quaternary structure, homotetramer.

The protein localises to the cytoplasm. It catalyses the reaction L-citrulline + L-aspartate + ATP = 2-(N(omega)-L-arginino)succinate + AMP + diphosphate + H(+). The protein operates within amino-acid biosynthesis; L-arginine biosynthesis; L-arginine from L-ornithine and carbamoyl phosphate: step 2/3. The chain is Argininosuccinate synthase from Thiobacillus denitrificans (strain ATCC 25259 / T1).